We begin with the raw amino-acid sequence, 343 residues long: Methionine import ATP-binding protein MetN 1 (343 aa).

The region spanning 2-241 (IKLSNITKVF…PKTPLAQKFI (240 aa)) is the ABC transporter domain. An ATP-binding site is contributed by 38-45 (GASGAGKS).

The protein belongs to the ABC transporter superfamily. Methionine importer (TC 3.A.1.24) family. As to quaternary structure, the complex is composed of two ATP-binding proteins (MetN), two transmembrane proteins (MetI) and a solute-binding protein (MetQ).

Its subcellular location is the cell inner membrane. The enzyme catalyses L-methionine(out) + ATP + H2O = L-methionine(in) + ADP + phosphate + H(+). It catalyses the reaction D-methionine(out) + ATP + H2O = D-methionine(in) + ADP + phosphate + H(+). Its function is as follows. Part of the ABC transporter complex MetNIQ involved in methionine import. Responsible for energy coupling to the transport system. This Salmonella typhi protein is Methionine import ATP-binding protein MetN 1.